Here is a 1866-residue protein sequence, read N- to C-terminus: Rho GTPase-activating protein 100F (1866 aa).

Disordered regions lie at residues M22–K98, R262–S336, and L466–A530. Over residues G59–H77 the composition is skewed to low complexity. The PDZ domain maps to L179–G264. A compositionally biased stretch (pro residues) spans P271–V286. Positions T301 to S326 are enriched in basic and acidic residues. At S719 the chain carries Phosphoserine. The disordered stretch occupies residues A745–H775. The span at P750 to H760 shows a compositional bias: polar residues. Residues K789–A908 form the C2 domain. Positions A948–Q1148 constitute a Rho-GAP domain. Disordered regions lie at residues G1273–I1328, P1356–N1380, S1393–S1479, F1514–T1607, Y1644–L1727, and D1819–G1840. A compositionally biased stretch (pro residues) spans D1282–P1292. The span at S1293–G1302 shows a compositional bias: low complexity. Composition is skewed to polar residues over residues P1356–R1377, S1393–S1408, and G1416–G1429. Low complexity predominate over residues S1443–S1479. Residues Q1538 to D1587 show a composition bias toward polar residues. Composition is skewed to low complexity over residues S1590 to T1607 and Y1644 to S1658. Positions G1659–A1670 are enriched in gly residues. Low complexity-rich tracts occupy residues V1671–S1688 and G1696–T1720. Over residues H1830–K1839 the composition is skewed to basic and acidic residues.

Interacts (via PDZ domain) with Nrx-1; may recruit Nrx-1 to the presynaptic active zone.

Its subcellular location is the presynapse. Functionally, GTPase activator for the Rho-type GTPases by converting them to an inactive GDP-bound state. Promotes the anchoring of Liprin-alpha clusters at synapses. Recruits and keeps Nrx-1 levels high in active zones in the presynapse opposite the postsynaptic region. This Drosophila melanogaster (Fruit fly) protein is Rho GTPase-activating protein 100F (RhoGAP100F).